The chain runs to 172 residues: Translationally-controlled tumor protein homolog (172 aa).

Residues 1–172 (MKIYKDIITG…FKHGLEEEKC (172 aa)) form the TCTP domain. A Phosphoserine modification is found at Ser-50. Phosphothreonine is present on residues Thr-58 and Thr-61.

The protein belongs to the TCTP family.

The protein resides in the cytoplasm. Its function is as follows. Involved in calcium binding and microtubule stabilization. In Drosophila melanogaster (Fruit fly), this protein is Translationally-controlled tumor protein homolog (Tctp).